A 474-amino-acid chain; its full sequence is PRAME family member 8 (474 aa).

One copy of the LRR 1; degenerate repeat lies at 97–122; the sequence is QSKLQVLDLRNVDENFCDIFSGATAS. The LRR 2; degenerate repeat unit spans residues 177–201; that stretch reads HVCCKELQVFGMPIHSIIEVLNMVE. The stretch at 202–228 is one LRR 3; degenerate repeat; that stretch reads LDCIQEVEVCCPWELSTLVKFAPYLGQ. Residues 229–264 form an LRR 4; degenerate repeat; sequence MRNLRKLVLFNIRASACIPPDNKGQFIARFTSQFLK. LRR repeat units follow at residues 265–290, 291–322, 323–341, 347–374, and 375–399; these read LDYFQNLSMHSVSFLEGHLDQLLRCL, QASLEMVVMTDCLLSESDLKHLSWCPSIRQLK, ELDLRGVTLTHFSPEPLTG, VATLQTLDLEDCGIMDSQLSAILPVLSR, and CSQLSTFSFCGNLISMAALENLLRH.

This sequence belongs to the PRAME family.

The sequence is that of PRAME family member 8 from Homo sapiens (Human).